Reading from the N-terminus, the 690-residue chain is Ectopic P granules protein 2 (690 aa).

Coiled coils occupy residues 20–181, 359–409, 458–494, and 560–643; these read IELA…EREV, ELLR…TIQE, LESG…SLLL, and ATIE…ETKR. An LIR 1 motif is present at residues 61–64; the sequence is YSTL. The required for interaction with lgg-1 stretch occupies residues 381–385; the sequence is DFKIL. The interval 666 to 690 is disordered; it reads EELDEEPKASTESEEKAEWEMVDEE. The segment covering 671-684 has biased composition (basic and acidic residues); sequence EPKASTESEEKAEW. The LIR 2 signature appears at 684 to 687; that stretch reads WEMV.

As to quaternary structure, interacts with sepa-1. Interacts (via the LIR motifs) with lgg-1 and lgg-2. Shows strong interaction with lgg-1 and weak interaction with lgg-2.

The protein resides in the cytoplasm. Its function is as follows. Involved in autophagy. Thought to act as an adapter protein that brings PGL granules to autophagic structures containing lgg-1. Association with other adapters such as sepa-1 is required for the accumulation and degradation of germ cell specific P-granules by autophagy in somatic cells. This ensures exclusive localization of the P-granules in germ cells. May also play a role in the removal of sepa-1 from somatic cells. The protein is Ectopic P granules protein 2 of Caenorhabditis elegans.